The sequence spans 261 residues: Protein LIKE COV 2 (261 aa).

Residues 1–38 (MAEGKEATTSSLSQGLTPHQDPDDAPKSPPNSPNSSTR) form a disordered region. At 1–56 (MAEGKEATTSSLSQGLTPHQDPDDAPKSPPNSPNSSTRKACYGVLQSWVSKKFMTG) the chain is on the cytoplasmic side. The span at 7–17 (ATTSSLSQGLT) shows a compositional bias: polar residues. Residues 57 to 77 (FVVLFPVAVTFLITWWFIQFV) form a helical membrane-spanning segment. Residues 78–91 (DGFFSPIYENLGVD) are Extracellular-facing. The helical transmembrane segment at 92-112 (IFGLGFITSVLFTFFVGIFAS) threads the bilayer. The Cytoplasmic segment spans residues 113 to 261 (SWLGSTVFWL…HSLRVPLNRL (149 aa)).

The protein belongs to the plant COV1 protein family.

The protein localises to the membrane. The sequence is that of Protein LIKE COV 2 from Arabidopsis thaliana (Mouse-ear cress).